Consider the following 219-residue polypeptide: Phosphatidylserine decarboxylase proenzyme (219 aa).

Ser188 functions as the Schiff-base intermediate with substrate; via pyruvic acid in the catalytic mechanism. Residue Ser188 is modified to Pyruvic acid (Ser); by autocatalysis.

It belongs to the phosphatidylserine decarboxylase family. PSD-A subfamily. As to quaternary structure, heterodimer of a large membrane-associated beta subunit and a small pyruvoyl-containing alpha subunit. It depends on pyruvate as a cofactor. In terms of processing, is synthesized initially as an inactive proenzyme. Formation of the active enzyme involves a self-maturation process in which the active site pyruvoyl group is generated from an internal serine residue via an autocatalytic post-translational modification. Two non-identical subunits are generated from the proenzyme in this reaction, and the pyruvate is formed at the N-terminus of the alpha chain, which is derived from the carboxyl end of the proenzyme. The post-translation cleavage follows an unusual pathway, termed non-hydrolytic serinolysis, in which the side chain hydroxyl group of the serine supplies its oxygen atom to form the C-terminus of the beta chain, while the remainder of the serine residue undergoes an oxidative deamination to produce ammonia and the pyruvoyl prosthetic group on the alpha chain.

The protein localises to the cell membrane. It carries out the reaction a 1,2-diacyl-sn-glycero-3-phospho-L-serine + H(+) = a 1,2-diacyl-sn-glycero-3-phosphoethanolamine + CO2. The protein operates within phospholipid metabolism; phosphatidylethanolamine biosynthesis; phosphatidylethanolamine from CDP-diacylglycerol: step 2/2. Its function is as follows. Catalyzes the formation of phosphatidylethanolamine (PtdEtn) from phosphatidylserine (PtdSer). In Geobacter sp. (strain M21), this protein is Phosphatidylserine decarboxylase proenzyme.